A 94-amino-acid polypeptide reads, in one-letter code: DNA-directed RNA polymerase subunit omega (94 aa).

The protein belongs to the RNA polymerase subunit omega family. In terms of assembly, consists of a sigma factor and the RNAP core enzyme which is composed of 2 alpha chains, 1 beta chain, 1 beta' chain and 1 subunit omega.

The enzyme catalyses RNA(n) + a ribonucleoside 5'-triphosphate = RNA(n+1) + diphosphate. Functionally, promotes RNA polymerase assembly. Latches the N- and C-terminal regions of the beta' subunit thereby facilitating its interaction with the beta and alpha subunits. This chain is DNA-directed RNA polymerase subunit omega, found in Shewanella violacea (strain JCM 10179 / CIP 106290 / LMG 19151 / DSS12).